The sequence spans 275 residues: Large ribosomal subunit protein uL2 (275 aa).

The disordered stretch occupies residues 221–275 (RGMTMNPVDHPMGGGEGRSKGHIPQSPWGIPAKGYKTRKSKKPSDKLIVKRRKQK).

This sequence belongs to the universal ribosomal protein uL2 family. As to quaternary structure, part of the 50S ribosomal subunit. Forms a bridge to the 30S subunit in the 70S ribosome.

Functionally, one of the primary rRNA binding proteins. Required for association of the 30S and 50S subunits to form the 70S ribosome, for tRNA binding and peptide bond formation. It has been suggested to have peptidyltransferase activity; this is somewhat controversial. Makes several contacts with the 16S rRNA in the 70S ribosome. This is Large ribosomal subunit protein uL2 from Kosmotoga olearia (strain ATCC BAA-1733 / DSM 21960 / TBF 19.5.1).